The following is a 206-amino-acid chain: Probable metallo-hydrolase MJ0888 (206 aa).

Zn(2+) is bound by residues His-55, His-57, Asp-59, His-60, His-130, Asp-147, and His-190.

This sequence belongs to the metallo-beta-lactamase superfamily. The cofactor is Zn(2+).

The sequence is that of Probable metallo-hydrolase MJ0888 from Methanocaldococcus jannaschii (strain ATCC 43067 / DSM 2661 / JAL-1 / JCM 10045 / NBRC 100440) (Methanococcus jannaschii).